The following is a 286-amino-acid chain: Beta-lactamase Ohio-1 (286 aa).

Residues 1–21 form the signal peptide; it reads MRYFRLCIISLLATLPLRVHA. Ser-66 functions as the Acyl-ester intermediate in the catalytic mechanism. A disulfide bridge links Cys-73 with Cys-119. Glu-164 functions as the Proton acceptor in the catalytic mechanism. A substrate-binding site is contributed by 230–232; it reads KTG.

It belongs to the class-A beta-lactamase family.

It catalyses the reaction a beta-lactam + H2O = a substituted beta-amino acid. The protein is Beta-lactamase Ohio-1 of Enterobacter cloacae.